Reading from the N-terminus, the 580-residue chain is V-type proton ATPase catalytic subunit A (580 aa).

Residue 209–216 (GAFGCGKT) participates in ATP binding.

This sequence belongs to the ATPase alpha/beta chains family. As to quaternary structure, V-ATPase is a heteromultimeric enzyme composed of a peripheral catalytic V1 complex (main components: subunits A, B, C, D, E, and F) attached to an integral membrane V0 proton pore complex (main component: the proteolipid protein).

It catalyses the reaction ATP + H2O + 4 H(+)(in) = ADP + phosphate + 5 H(+)(out). Its function is as follows. Catalytic subunit of the peripheral V1 complex of vacuolar ATPase. V-ATPase vacuolar ATPase is responsible for acidifying a variety of intracellular compartments in eukaryotic cells. This chain is V-type proton ATPase catalytic subunit A, found in Hordeum vulgare (Barley).